The following is a 108-amino-acid chain: V-type proton ATPase subunit G (108 aa).

Over residues 48–60 the composition is skewed to basic and acidic residues; it reads YASKKEEEFKKSE. Residues 48 to 89 form a disordered region; the sequence is YASKKEEEFKKSESQASGIYSQAEAESKKQVQDTFASIETSS. Residues 79 to 89 are compositionally biased toward polar residues; that stretch reads QDTFASIETSS.

Belongs to the V-ATPase G subunit family. As to quaternary structure, V-ATPase is a heteromultimeric enzyme composed of a peripheral catalytic V1 complex (components A to H) attached to an integral membrane V0 proton pore complex (components: a, c, c', c'', d, e, f and VOA1).

It is found in the vacuole membrane. Its function is as follows. Subunit of the V1 complex of vacuolar(H+)-ATPase (V-ATPase), a multisubunit enzyme composed of a peripheral complex (V1) that hydrolyzes ATP and a membrane integral complex (V0) that translocates protons. V-ATPase is responsible for acidifying and maintaining the pH of intracellular compartments. The polypeptide is V-type proton ATPase subunit G (vma10) (Schizosaccharomyces pombe (strain 972 / ATCC 24843) (Fission yeast)).